The following is a 512-amino-acid chain: Krueppel-like factor 11 (512 aa).

The interval 109 to 128 is disordered; the sequence is PQSPDLVEPSTRTPVSPQVT. The segment covering 118–128 has biased composition (polar residues); that stretch reads STRTPVSPQVT. Ser124 is subject to Phosphoserine. 3 C2H2-type zinc fingers span residues 394–418, 424–448, and 454–476; these read YVCS…LRTH, FNCS…RRTH, and FVCP…ARRH.

It belongs to the Sp1 C2H2-type zinc-finger protein family. As to quaternary structure, interacts with SIN3A. As to expression, ubiquitous. Higher expression in erythroid cells.

The protein resides in the nucleus. Functionally, transcription factor. Activates the epsilon- and gamma-globin gene promoters and, to a much lower degree, the beta-globin gene and represses promoters containing SP1-like binding inhibiting cell growth. Represses transcription of SMAD7 which enhances TGF-beta signaling. Induces apoptosis. This Homo sapiens (Human) protein is Krueppel-like factor 11 (KLF11).